The chain runs to 151 residues: Ribosome maturation factor RimP (151 aa).

The protein belongs to the RimP family.

The protein localises to the cytoplasm. In terms of biological role, required for maturation of 30S ribosomal subunits. This is Ribosome maturation factor RimP from Vibrio cholerae serotype O1 (strain ATCC 39541 / Classical Ogawa 395 / O395).